We begin with the raw amino-acid sequence, 341 residues long: Ketol-acid reductoisomerase (NADP(+)) (341 aa).

Residues 2–181 enclose the KARI N-terminal Rossmann domain; it reads VKVYYNGDAN…GSARAGVIET (180 aa). NADP(+)-binding positions include 25–28, Arg48, Ser52, and 82–85; these read YGSQ and DEHQ. His107 is an active-site residue. Gly133 contacts NADP(+). A KARI C-terminal knotted domain is found at 182–327; sequence TFKEETETDL…RELRKMMPFV (146 aa). The Mg(2+) site is built by Asp190, Glu194, Glu226, and Glu230. Ser251 is a substrate binding site.

The protein belongs to the ketol-acid reductoisomerase family. Mg(2+) serves as cofactor.

The enzyme catalyses (2R)-2,3-dihydroxy-3-methylbutanoate + NADP(+) = (2S)-2-acetolactate + NADPH + H(+). It catalyses the reaction (2R,3R)-2,3-dihydroxy-3-methylpentanoate + NADP(+) = (S)-2-ethyl-2-hydroxy-3-oxobutanoate + NADPH + H(+). The protein operates within amino-acid biosynthesis; L-isoleucine biosynthesis; L-isoleucine from 2-oxobutanoate: step 2/4. It functions in the pathway amino-acid biosynthesis; L-valine biosynthesis; L-valine from pyruvate: step 2/4. Functionally, involved in the biosynthesis of branched-chain amino acids (BCAA). Catalyzes an alkyl-migration followed by a ketol-acid reduction of (S)-2-acetolactate (S2AL) to yield (R)-2,3-dihydroxy-isovalerate. In the isomerase reaction, S2AL is rearranged via a Mg-dependent methyl migration to produce 3-hydroxy-3-methyl-2-ketobutyrate (HMKB). In the reductase reaction, this 2-ketoacid undergoes a metal-dependent reduction by NADPH to yield (R)-2,3-dihydroxy-isovalerate. This chain is Ketol-acid reductoisomerase (NADP(+)), found in Anoxybacillus flavithermus (strain DSM 21510 / WK1).